The sequence spans 172 residues: ATP synthase subunit b (172 aa).

Residues 27–47 (LAIVIFGLYKFLPPFVGGILE) form a helical membrane-spanning segment.

This sequence belongs to the ATPase B chain family. In terms of assembly, F-type ATPases have 2 components, F(1) - the catalytic core - and F(0) - the membrane proton channel. F(1) has five subunits: alpha(3), beta(3), gamma(1), delta(1), epsilon(1). F(0) has four main subunits: a(1), b(1), b'(1) and c(10-14). The alpha and beta chains form an alternating ring which encloses part of the gamma chain. F(1) is attached to F(0) by a central stalk formed by the gamma and epsilon chains, while a peripheral stalk is formed by the delta, b and b' chains.

It localises to the cellular thylakoid membrane. In terms of biological role, f(1)F(0) ATP synthase produces ATP from ADP in the presence of a proton or sodium gradient. F-type ATPases consist of two structural domains, F(1) containing the extramembraneous catalytic core and F(0) containing the membrane proton channel, linked together by a central stalk and a peripheral stalk. During catalysis, ATP synthesis in the catalytic domain of F(1) is coupled via a rotary mechanism of the central stalk subunits to proton translocation. Functionally, component of the F(0) channel, it forms part of the peripheral stalk, linking F(1) to F(0). The protein is ATP synthase subunit b of Prochlorococcus marinus (strain MIT 9303).